The chain runs to 688 residues: G protein-coupled receptor kinase 3 (688 aa).

Positions 1–190 (MADLEAVLAD…ELNIHLSMND (190 aa)) are N-terminal. Positions 54–175 (TFDKIFNQKI…MESEKFTRFC (122 aa)) constitute an RGS domain. The region spanning 191-453 (FSVHRIIGRG…ARELKEHIFF (263 aa)) is the Protein kinase domain. ATP contacts are provided by residues 197-205 (IGRGGFGEV) and lysine 220. Aspartate 317 acts as the Proton acceptor in catalysis. One can recognise an AGC-kinase C-terminal domain in the interval 454 to 521 (KGIDWQYVYL…MISERWQQEV (68 aa)). In terms of domain architecture, PH spans 558–652 (DCIMHGYMLK…WLKELTCTFN (95 aa)).

This sequence belongs to the protein kinase superfamily. AGC Ser/Thr protein kinase family. GPRK subfamily. In terms of assembly, interacts with GIT1. Post-translationally, ubiquitinated. Expressed in brain cortex, hippocampus, striatum, hypothalamus, cerebellum and brainstem (at protein level).

Its subcellular location is the postsynapse. It localises to the presynapse. It catalyses the reaction [beta-adrenergic receptor] + ATP = [beta-adrenergic receptor]-phosphate + ADP + H(+). Its function is as follows. Specifically phosphorylates the agonist-occupied form of the beta-adrenergic and closely related receptors. The polypeptide is G protein-coupled receptor kinase 3 (Rattus norvegicus (Rat)).